We begin with the raw amino-acid sequence, 119 residues long: MARIAGVNIPVHKHAWVALTSIYGVGRTRAKAICDEAGVPRDRKVKELTEQELEAIRTALGKYEVEGDLRRAVAMDIKRLMDLGCYRGIRHRRGLPVRGQRTQTNARTRKGPRRGPAGK.

A disordered region spans residues 94–119 (GLPVRGQRTQTNARTRKGPRRGPAGK).

Belongs to the universal ribosomal protein uS13 family. As to quaternary structure, part of the 30S ribosomal subunit. Forms a loose heterodimer with protein S19. Forms two bridges to the 50S subunit in the 70S ribosome.

Its function is as follows. Located at the top of the head of the 30S subunit, it contacts several helices of the 16S rRNA. In the 70S ribosome it contacts the 23S rRNA (bridge B1a) and protein L5 of the 50S subunit (bridge B1b), connecting the 2 subunits; these bridges are implicated in subunit movement. Contacts the tRNAs in the A and P-sites. The polypeptide is Small ribosomal subunit protein uS13 (Alkalilimnicola ehrlichii (strain ATCC BAA-1101 / DSM 17681 / MLHE-1)).